A 284-amino-acid polypeptide reads, in one-letter code: 4-hydroxybenzoate octaprenyltransferase (284 aa).

A run of 8 helical transmembrane segments spans residues 16 to 36, 40 to 60, 91 to 111, 132 to 152, 157 to 177, 207 to 227, 231 to 251, and 259 to 279; these read PIGILLLLWPTLWALWMASDG, WTLVAIFTLGTVLMRSAGCAV, LLVALVLTLLAFALIWPLNTL, FFAIPQAYLGIAFGFGIPMGF, NTVPAAAWWLLVANVFWSVAY, AIIMFCYAMTLGIIGIVGWQF, IWFVAGLLLAAVCAAYHYTLI, and CFAAFNHNNWLGGAIFGGVAL.

The protein belongs to the UbiA prenyltransferase family. Mg(2+) serves as cofactor.

It localises to the cell inner membrane. It carries out the reaction all-trans-octaprenyl diphosphate + 4-hydroxybenzoate = 4-hydroxy-3-(all-trans-octaprenyl)benzoate + diphosphate. It participates in cofactor biosynthesis; ubiquinone biosynthesis. Functionally, catalyzes the prenylation of para-hydroxybenzoate (PHB) with an all-trans polyprenyl group. Mediates the second step in the final reaction sequence of ubiquinone-8 (UQ-8) biosynthesis, which is the condensation of the polyisoprenoid side chain with PHB, generating the first membrane-bound Q intermediate 3-octaprenyl-4-hydroxybenzoate. The sequence is that of 4-hydroxybenzoate octaprenyltransferase from Janthinobacterium sp. (strain Marseille) (Minibacterium massiliensis).